We begin with the raw amino-acid sequence, 114 residues long: Large ribosomal subunit protein uL22 (114 aa).

The protein belongs to the universal ribosomal protein uL22 family. As to quaternary structure, part of the 50S ribosomal subunit.

Its function is as follows. This protein binds specifically to 23S rRNA; its binding is stimulated by other ribosomal proteins, e.g. L4, L17, and L20. It is important during the early stages of 50S assembly. It makes multiple contacts with different domains of the 23S rRNA in the assembled 50S subunit and ribosome. In terms of biological role, the globular domain of the protein is located near the polypeptide exit tunnel on the outside of the subunit, while an extended beta-hairpin is found that lines the wall of the exit tunnel in the center of the 70S ribosome. The polypeptide is Large ribosomal subunit protein uL22 (Ehrlichia ruminantium (strain Gardel)).